The chain runs to 478 residues: Protein nucleotidyltransferase YdiU (478 aa).

8 residues coordinate ATP: Gly-84, Gly-86, Arg-87, Lys-107, Asp-119, Gly-120, Arg-170, and Arg-177. Residue Asp-246 is the Proton acceptor of the active site. Positions 247 and 256 each coordinate Mg(2+). ATP is bound at residue Asp-256.

It belongs to the SELO family. Mg(2+) serves as cofactor. Requires Mn(2+) as cofactor.

The enzyme catalyses L-seryl-[protein] + ATP = 3-O-(5'-adenylyl)-L-seryl-[protein] + diphosphate. The catalysed reaction is L-threonyl-[protein] + ATP = 3-O-(5'-adenylyl)-L-threonyl-[protein] + diphosphate. It catalyses the reaction L-tyrosyl-[protein] + ATP = O-(5'-adenylyl)-L-tyrosyl-[protein] + diphosphate. It carries out the reaction L-histidyl-[protein] + UTP = N(tele)-(5'-uridylyl)-L-histidyl-[protein] + diphosphate. The enzyme catalyses L-seryl-[protein] + UTP = O-(5'-uridylyl)-L-seryl-[protein] + diphosphate. The catalysed reaction is L-tyrosyl-[protein] + UTP = O-(5'-uridylyl)-L-tyrosyl-[protein] + diphosphate. Its function is as follows. Nucleotidyltransferase involved in the post-translational modification of proteins. It can catalyze the addition of adenosine monophosphate (AMP) or uridine monophosphate (UMP) to a protein, resulting in modifications known as AMPylation and UMPylation. The sequence is that of Protein nucleotidyltransferase YdiU from Shigella boydii serotype 4 (strain Sb227).